Consider the following 46-residue polypeptide: Mu-segestritoxin-Sf1d (46 aa).

Intrachain disulfides connect cysteine 3–cysteine 19, cysteine 10–cysteine 22, cysteine 18–cysteine 42, and cysteine 24–cysteine 40. Positions 31-33 are keys region for toxin activity; that stretch reads RPW.

Belongs to the neurotoxin 16 (SFI) family. Expressed by the venom gland.

The protein resides in the secreted. Insecticidal toxin. It inhibits insect voltage-gated sodium channels (Nav) by partially blocking the channel pore in DUM neurons from the American cockroach, not by acting as a gating modifier. The inhibition is only partially reversible after prolonged washout. In vivo, the toxin causes flaccid paralysis followed by death when injected into Heliothis virescens larvae. It also causes uncoordinated movements followed by full paralysis to sheep blowflies (Lucilia cuprina). When the toxin is fused to snowdrop lectin, it is orally active against larvae of the tomato moth (Laconobia oleracea), the rice brown planthopper (Nilaparvata lugens), and the peach-potato aphid (Myzus persicae). The polypeptide is Mu-segestritoxin-Sf1d (Segestria florentina (Tube-web spider)).